The primary structure comprises 272 residues: Ribonuclease HII (272 aa).

In terms of domain architecture, RNase H type-2 spans 87–272; sequence KYVAGVDEVG…HRMSFLKNIL (186 aa). Positions 93, 94, and 188 each coordinate a divalent metal cation.

It belongs to the RNase HII family. It depends on Mn(2+) as a cofactor. Mg(2+) serves as cofactor.

It is found in the cytoplasm. It catalyses the reaction Endonucleolytic cleavage to 5'-phosphomonoester.. Endonuclease that specifically degrades the RNA of RNA-DNA hybrids. The sequence is that of Ribonuclease HII from Clostridium perfringens (strain ATCC 13124 / DSM 756 / JCM 1290 / NCIMB 6125 / NCTC 8237 / Type A).